Reading from the N-terminus, the 202-residue chain is Orotate phosphoribosyltransferase (202 aa).

Residues lysine 93 and 113-121 (EDIITTGGS) contribute to the 5-phospho-alpha-D-ribose 1-diphosphate site. Orotate is bound by residues threonine 117 and arginine 145.

It belongs to the purine/pyrimidine phosphoribosyltransferase family. PyrE subfamily. In terms of assembly, homodimer. Requires Mg(2+) as cofactor.

It carries out the reaction orotidine 5'-phosphate + diphosphate = orotate + 5-phospho-alpha-D-ribose 1-diphosphate. It participates in pyrimidine metabolism; UMP biosynthesis via de novo pathway; UMP from orotate: step 1/2. Functionally, catalyzes the transfer of a ribosyl phosphate group from 5-phosphoribose 1-diphosphate to orotate, leading to the formation of orotidine monophosphate (OMP). The chain is Orotate phosphoribosyltransferase from Campylobacter concisus (strain 13826).